Consider the following 476-residue polypeptide: Transcriptional regulator claA (476 aa).

The zn(2)-C6 fungal-type DNA-binding region spans 25–52 (CDTCLKAKIKCSQAKPTCARCLQQGRQC). Positions 63 to 92 (PSTKNLPLDQLQQPKGRTAGGTARRSLSRR) are disordered. Over residues 64-77 (STKNLPLDQLQQPK) the composition is skewed to polar residues.

It localises to the nucleus. Functionally, transcriptional regulator; part of the cla gene cluster that produces clavatol and ortho-quinone methide. The clavatol biosynthesis cluster cla and the terrestric acid cluster tra are both involved in the production of peniphenones and penilactones. This Penicillium crustosum (Blue mold fungus) protein is Transcriptional regulator claA.